Reading from the N-terminus, the 149-residue chain is Nucleoside diphosphate kinase (149 aa).

Residues Lys-9, Phe-57, Arg-85, Thr-91, Arg-102, and Asn-112 each coordinate ATP. The active-site Pros-phosphohistidine intermediate is His-115.

The protein belongs to the NDK family. Homotetramer. Mg(2+) is required as a cofactor.

The protein resides in the cytoplasm. The catalysed reaction is a 2'-deoxyribonucleoside 5'-diphosphate + ATP = a 2'-deoxyribonucleoside 5'-triphosphate + ADP. The enzyme catalyses a ribonucleoside 5'-diphosphate + ATP = a ribonucleoside 5'-triphosphate + ADP. Functionally, major role in the synthesis of nucleoside triphosphates other than ATP. The ATP gamma phosphate is transferred to the NDP beta phosphate via a ping-pong mechanism, using a phosphorylated active-site intermediate. The protein is Nucleoside diphosphate kinase of Roseiflexus castenholzii (strain DSM 13941 / HLO8).